Here is a 94-residue protein sequence, read N- to C-terminus: Integration host factor subunit beta (94 aa).

The protein belongs to the bacterial histone-like protein family. As to quaternary structure, heterodimer of an alpha and a beta chain.

Functionally, this protein is one of the two subunits of integration host factor, a specific DNA-binding protein that functions in genetic recombination as well as in transcriptional and translational control. This Roseobacter denitrificans (strain ATCC 33942 / OCh 114) (Erythrobacter sp. (strain OCh 114)) protein is Integration host factor subunit beta.